Consider the following 307-residue polypeptide: Thymidylate synthase (307 aa).

Residues 1–22 are disordered; sequence MLVEGSELQSGAQQPRTEAPQH. The span at 7 to 16 shows a compositional bias: polar residues; that stretch reads ELQSGAQQPR. Residue R44 coordinates dUMP. S108 is modified (phosphoserine). Residues 169 to 170, 189 to 190, 209 to 212, N220, and 250 to 252 contribute to the dUMP site; these read RR, CH, RSGD, and HIY. The active-site Nucleophile is the C189. D212 is a (6R)-5,10-methylene-5,6,7,8-tetrahydrofolate binding site. Glycyl lysine isopeptide (Lys-Gly) (interchain with G-Cter in SUMO2) cross-links involve residues K286 and K302. (6R)-5,10-methylene-5,6,7,8-tetrahydrofolate is bound at residue A306.

The protein belongs to the thymidylate synthase family. As to quaternary structure, homodimer.

It is found in the nucleus. It localises to the cytoplasm. Its subcellular location is the mitochondrion. The protein localises to the mitochondrion matrix. The protein resides in the mitochondrion inner membrane. The catalysed reaction is dUMP + (6R)-5,10-methylene-5,6,7,8-tetrahydrofolate = 7,8-dihydrofolate + dTMP. It participates in pyrimidine metabolism; dTTP biosynthesis. Functionally, catalyzes the reductive methylation of 2'-deoxyuridine 5'-monophosphate (dUMP) to thymidine 5'-monophosphate (dTMP), using the cosubstrate, 5,10- methylenetetrahydrofolate (CH2H4folate) as a 1-carbon donor and reductant and contributes to the de novo mitochondrial thymidylate biosynthesis pathway. This Rattus norvegicus (Rat) protein is Thymidylate synthase (Tyms).